Reading from the N-terminus, the 434-residue chain is Serine--tRNA ligase (434 aa).

237-239 (TAE) contacts L-serine. 268–270 (RAE) lines the ATP pocket. L-serine is bound at residue E291. 358 to 361 (EISS) provides a ligand contact to ATP. S393 contributes to the L-serine binding site.

The protein belongs to the class-II aminoacyl-tRNA synthetase family. Type-1 seryl-tRNA synthetase subfamily. Homodimer. The tRNA molecule binds across the dimer.

It is found in the cytoplasm. The enzyme catalyses tRNA(Ser) + L-serine + ATP = L-seryl-tRNA(Ser) + AMP + diphosphate + H(+). The catalysed reaction is tRNA(Sec) + L-serine + ATP = L-seryl-tRNA(Sec) + AMP + diphosphate + H(+). It functions in the pathway aminoacyl-tRNA biosynthesis; selenocysteinyl-tRNA(Sec) biosynthesis; L-seryl-tRNA(Sec) from L-serine and tRNA(Sec): step 1/1. Its function is as follows. Catalyzes the attachment of serine to tRNA(Ser). Is also able to aminoacylate tRNA(Sec) with serine, to form the misacylated tRNA L-seryl-tRNA(Sec), which will be further converted into selenocysteinyl-tRNA(Sec). The chain is Serine--tRNA ligase from Rhodopseudomonas palustris (strain BisB5).